A 311-amino-acid polypeptide reads, in one-letter code: Apolipoprotein E (311 aa).

An N-terminal signal peptide occupies residues 1–18; it reads MKVWWAVLAAAILAGCRA. Tandem repeats lie at residues 74–95, 96–116, 117–138, 139–160, 161–182, 183–204, 205–226, and 227–248. The 8 X 22 AA approximate tandem repeats stretch occupies residues 74-248; sequence MLMEETMKEV…RLNEVREQVE (175 aa). M136 is modified (methionine sulfoxide). At S140 the chain carries Phosphoserine. The tract at residues 151–161 is LDL and other lipoprotein receptors binding; the sequence is HLRKLRKRLLR. Position 155–158 (155–158) interacts with heparin; it reads LRKR. The segment at 203–283 is lipid-binding and lipoprotein association; sequence VATVGTLAGR…SWFEPLVEDM (81 aa). A glycan (O-linked (GalNAc...) threonine) is linked at T205. 222–229 is a binding site for heparin; that stretch reads GERLRGHL. Residues 259–311 form a homooligomerization region; the sequence is PQMRLQAEAFQARLKSWFEPLVEDMQRQWAGLVEKLQAAMPSKAPAAAPIENQ. Residues 271-283 form a specificity for association with VLDL region; the sequence is RLKSWFEPLVEDM.

It belongs to the apolipoprotein A1/A4/E family. Homotetramer. May interact with ABCA1; functionally associated with ABCA1 in the biogenesis of HDLs. May interact with APP/A4 amyloid-beta peptide; the interaction is extremely stable in vitro but its physiological significance is unclear. May interact with MAPT. May interact with MAP2. In the cerebrospinal fluid, interacts with secreted SORL1. Interacts with PMEL; this allows the loading of PMEL luminal fragment on ILVs to induce fibril nucleation. In terms of processing, APOE exists as multiple glycosylated and sialylated glycoforms within cells and in plasma. The extent of glycosylation and sialylation are tissue and context specific. Post-translationally, glycated in plasma VLDL. Phosphorylated by FAM20C in the extracellular medium.

The protein localises to the secreted. Its subcellular location is the extracellular space. The protein resides in the extracellular matrix. It is found in the extracellular vesicle. It localises to the endosome. The protein localises to the multivesicular body. Its function is as follows. APOE is an apolipoprotein, a protein associating with lipid particles, that mainly functions in lipoprotein-mediated lipid transport between organs via the plasma and interstitial fluids. APOE is a core component of plasma lipoproteins and is involved in their production, conversion and clearance. Apolipoproteins are amphipathic molecules that interact both with lipids of the lipoprotein particle core and the aqueous environment of the plasma. As such, APOE associates with chylomicrons, chylomicron remnants, very low density lipoproteins (VLDL) and intermediate density lipoproteins (IDL) but shows a preferential binding to high-density lipoproteins (HDL). It also binds a wide range of cellular receptors including the LDL receptor/LDLR and the very low-density lipoprotein receptor/VLDLR that mediate the cellular uptake of the APOE-containing lipoprotein particles. Finally, APOE also has a heparin-binding activity and binds heparan-sulfate proteoglycans on the surface of cells, a property that supports the capture and the receptor-mediated uptake of APOE-containing lipoproteins by cells. In Oryctolagus cuniculus (Rabbit), this protein is Apolipoprotein E (APOE).